A 145-amino-acid chain; its full sequence is 3-dehydroquinate dehydratase (145 aa).

Tyr24 serves as the catalytic Proton acceptor. Residues Asn75, His81, and Asp88 each coordinate substrate. His101 (proton donor) is an active-site residue. Substrate contacts are provided by residues 102–103 (IS) and Arg112.

This sequence belongs to the type-II 3-dehydroquinase family. As to quaternary structure, homododecamer.

It catalyses the reaction 3-dehydroquinate = 3-dehydroshikimate + H2O. Its pathway is metabolic intermediate biosynthesis; chorismate biosynthesis; chorismate from D-erythrose 4-phosphate and phosphoenolpyruvate: step 3/7. Functionally, catalyzes a trans-dehydration via an enolate intermediate. This Corynebacterium glutamicum (strain ATCC 13032 / DSM 20300 / JCM 1318 / BCRC 11384 / CCUG 27702 / LMG 3730 / NBRC 12168 / NCIMB 10025 / NRRL B-2784 / 534) protein is 3-dehydroquinate dehydratase (aroQ).